The following is a 447-amino-acid chain: MGKEKIHISIVVIGHVDSGKSTTTGHLIYKLGGIDKRVIERFEKEAAEMNKRSFKYAWVLDKLKAERERGITIDIALWKFETTKYYCTVIDAPGHRDFIKNMITGTSQADCAVLIIDSTTGGFEAGISKDGQTREHALLAFTLGVKQMICCCNKMDATTPKYSKSRFEEIVKEVSSYLKKVGYNPDKIAFIPISGFEGDNMIDRSTNLDWYKGPTLLEALDQISEPKRPSDKPLRLPLQDVYKIGGIGTVPVGRVETGVIKPGMVVTFGPSGLTTEVKSVEMHHEALQEALPGDNVGFNVKNVAVKDLKRGYVASNSKDDPAKEAANFTAQVIIMNHPGQIGNGYAPVLDCHTSHIAVKFAEIQTKIDRRSGKELEKEPKFLKNGDAGFVKMIPTKPMVVETFMSYPPLGRFAVRDMRQTVAVGVIKSVEKKDPTGAKVTKAAIKKK.

Residues 5–230 (KIHISIVVIG…DQISEPKRPS (226 aa)) enclose the tr-type G domain. Residues 14–21 (GHVDSGKS) form a G1 region. Residue 14–21 (GHVDSGKS) coordinates GTP. Residue Lys55 is modified to N6,N6-dimethyllysine. The G2 stretch occupies residues 70-74 (GITID). Position 79 is an N6,N6,N6-trimethyllysine (Lys79). The G3 stretch occupies residues 91–94 (DAPG). GTP contacts are provided by residues 91-95 (DAPGH) and 153-156 (NKMD). Positions 153–156 (NKMD) are G4. Lys187 carries the N6,N6,N6-trimethyllysine modification. The G5 stretch occupies residues 194 to 196 (SGF). Lys261 carries the post-translational modification N6-methyllysine. Position 289 is a 5-glutamyl glycerylphosphorylethanolamine (Glu289). Lys306 carries the post-translational modification N6,N6,N6-trimethyllysine. Glu362 is modified (5-glutamyl glycerylphosphorylethanolamine). N6,N6,N6-trimethyllysine is present on Lys396.

Belongs to the TRAFAC class translation factor GTPase superfamily. Classic translation factor GTPase family. EF-Tu/EF-1A subfamily.

Its subcellular location is the cytoplasm. Functionally, this protein promotes the GTP-dependent binding of aminoacyl-tRNA to the A-site of ribosomes during protein biosynthesis. The protein is Elongation factor 1-alpha of Daucus carota (Wild carrot).